The primary structure comprises 461 residues: tRNA modification GTPase MnmE (461 aa).

Residues R23, E88, and R127 each contribute to the (6S)-5-formyl-5,6,7,8-tetrahydrofolate site. Positions G223 to Y382 constitute a TrmE-type G domain. Residue N233 participates in K(+) binding. GTP-binding positions include N233–S238, T252–T258, and D277–G280. S237 provides a ligand contact to Mg(2+). K(+)-binding residues include T252, V254, and T257. T258 provides a ligand contact to Mg(2+). (6S)-5-formyl-5,6,7,8-tetrahydrofolate is bound at residue K461.

It belongs to the TRAFAC class TrmE-Era-EngA-EngB-Septin-like GTPase superfamily. TrmE GTPase family. In terms of assembly, homodimer. Heterotetramer of two MnmE and two MnmG subunits. K(+) serves as cofactor.

It localises to the cytoplasm. Functionally, exhibits a very high intrinsic GTPase hydrolysis rate. Involved in the addition of a carboxymethylaminomethyl (cmnm) group at the wobble position (U34) of certain tRNAs, forming tRNA-cmnm(5)s(2)U34. This chain is tRNA modification GTPase MnmE, found in Alkaliphilus oremlandii (strain OhILAs) (Clostridium oremlandii (strain OhILAs)).